We begin with the raw amino-acid sequence, 809 residues long: ATP-dependent zinc metalloprotease FTSH 3, mitochondrial (809 aa).

The transit peptide at 1–83 (MTMIFFSKLN…FANPRLRRFF (83 aa)) directs the protein to the mitochondrion. The span at 93–121 (YENYFPKDKQEPKSDQKSEHKEGSEKNEN) shows a compositional bias: basic and acidic residues. The tract at residues 93-122 (YENYFPKDKQEPKSDQKSEHKEGSEKNENE) is disordered. The chain crosses the membrane as a helical span at residues 132–152 (FQNLLIPLLALAVFFSTFSFG). Residue 362–369 (GPPGTGKT) participates in ATP binding. H586 contributes to the Zn(2+) binding site. E587 is a catalytic residue. Zn(2+)-binding residues include H590 and D662. The tract at residues 776–809 (GFEETEKDSAATPTVEPVVDDGAPPPFEPQVVPT) is disordered.

It in the N-terminal section; belongs to the AAA ATPase family. This sequence in the C-terminal section; belongs to the peptidase M41 family. Requires Zn(2+) as cofactor.

The protein localises to the mitochondrion inner membrane. Its function is as follows. Probable ATP-dependent zinc metallopeptidase. Involved in the assembly and/or stability of the complexes I and V of the mitochondrial oxidative phosphorylation system. The polypeptide is ATP-dependent zinc metalloprotease FTSH 3, mitochondrial (FTSH3) (Arabidopsis thaliana (Mouse-ear cress)).